We begin with the raw amino-acid sequence, 123 residues long: Large ribosomal subunit protein eL8 (123 aa).

The protein belongs to the eukaryotic ribosomal protein eL8 family. As to quaternary structure, part of the 50S ribosomal subunit. Probably part of the RNase P complex.

The protein localises to the cytoplasm. Its function is as follows. Multifunctional RNA-binding protein that recognizes the K-turn motif in ribosomal RNA, the RNA component of RNase P, box H/ACA, box C/D and box C'/D' sRNAs. The sequence is that of Large ribosomal subunit protein eL8 from Thermococcus gammatolerans (strain DSM 15229 / JCM 11827 / EJ3).